The chain runs to 705 residues: Polyribonucleotide nucleotidyltransferase (705 aa).

Asp-485 and Asp-491 together coordinate Mg(2+). The KH domain occupies 552–611; it reads PRVYTMTIAPEKIRDVIGAGGKTINKIIGETGVQIDIKEDGKIYVMSSDSVGANRALKMI. An S1 motif domain is found at 621–689; sequence GEIYLGKVTR…DQGRINLSRR (69 aa).

It belongs to the polyribonucleotide nucleotidyltransferase family. The cofactor is Mg(2+).

The protein resides in the cytoplasm. The enzyme catalyses RNA(n+1) + phosphate = RNA(n) + a ribonucleoside 5'-diphosphate. Its function is as follows. Involved in mRNA degradation. Catalyzes the phosphorolysis of single-stranded polyribonucleotides processively in the 3'- to 5'-direction. The chain is Polyribonucleotide nucleotidyltransferase from Clostridium tetani (strain Massachusetts / E88).